We begin with the raw amino-acid sequence, 477 residues long: ATP synthase subunit beta (477 aa).

148-155 contacts ATP; that stretch reads GGAGVGKT.

This sequence belongs to the ATPase alpha/beta chains family. As to quaternary structure, F-type ATPases have 2 components, CF(1) - the catalytic core - and CF(0) - the membrane proton channel. CF(1) has five subunits: alpha(3), beta(3), gamma(1), delta(1), epsilon(1). CF(0) has three main subunits: a(1), b(2) and c(9-12). The alpha and beta chains form an alternating ring which encloses part of the gamma chain. CF(1) is attached to CF(0) by a central stalk formed by the gamma and epsilon chains, while a peripheral stalk is formed by the delta and b chains.

It localises to the cell inner membrane. It carries out the reaction ATP + H2O + 4 H(+)(in) = ADP + phosphate + 5 H(+)(out). Functionally, produces ATP from ADP in the presence of a proton gradient across the membrane. The catalytic sites are hosted primarily by the beta subunits. The sequence is that of ATP synthase subunit beta from Psychrobacter cryohalolentis (strain ATCC BAA-1226 / DSM 17306 / VKM B-2378 / K5).